A 120-amino-acid chain; its full sequence is MFSLTQKIGFNAEKTACRYLQKQGLSFITKNFRYKQGEIDLIMSDQSMLVFIEVRYRRFSDFIHPVATVTPLKQRRLIKTALHYLQKHRLLDKISCRFDIVGITADRQITWIKNAIEVEY.

This sequence belongs to the UPF0102 family.

The polypeptide is UPF0102 protein COXBURSA331_A1934 (Coxiella burnetii (strain RSA 331 / Henzerling II)).